Reading from the N-terminus, the 227-residue chain is Cytochrome c oxidase subunit 2 (227 aa).

The Mitochondrial intermembrane segment spans residues 1 to 14 (MAYPFQLGLQDATS). A helical transmembrane segment spans residues 15–45 (PIMEELLHFHDHTLMIVFLISSLVLYIISSM). Over 46 to 59 (LTTKLTHTSTMDAQ) the chain is Mitochondrial matrix. The chain crosses the membrane as a helical span at residues 60–87 (EVETVWTILPAIILVLIALPSLRILYMM). The Mitochondrial intermembrane segment spans residues 88–227 (DEINNPSLTV…YFETWSALML (140 aa)). Cu cation is bound by residues histidine 161, cysteine 196, glutamate 198, cysteine 200, histidine 204, and methionine 207. Mg(2+) is bound at residue glutamate 198. Position 218 is a phosphotyrosine (tyrosine 218).

The protein belongs to the cytochrome c oxidase subunit 2 family. In terms of assembly, component of the cytochrome c oxidase (complex IV, CIV), a multisubunit enzyme composed of 14 subunits. The complex is composed of a catalytic core of 3 subunits MT-CO1, MT-CO2 and MT-CO3, encoded in the mitochondrial DNA, and 11 supernumerary subunits COX4I, COX5A, COX5B, COX6A, COX6B, COX6C, COX7A, COX7B, COX7C, COX8 and NDUFA4, which are encoded in the nuclear genome. The complex exists as a monomer or a dimer and forms supercomplexes (SCs) in the inner mitochondrial membrane with NADH-ubiquinone oxidoreductase (complex I, CI) and ubiquinol-cytochrome c oxidoreductase (cytochrome b-c1 complex, complex III, CIII), resulting in different assemblies (supercomplex SCI(1)III(2)IV(1) and megacomplex MCI(2)III(2)IV(2)). Found in a complex with TMEM177, COA6, COX18, COX20, SCO1 and SCO2. Interacts with TMEM177 in a COX20-dependent manner. Interacts with COX20. Interacts with COX16. It depends on Cu cation as a cofactor.

It is found in the mitochondrion inner membrane. The catalysed reaction is 4 Fe(II)-[cytochrome c] + O2 + 8 H(+)(in) = 4 Fe(III)-[cytochrome c] + 2 H2O + 4 H(+)(out). In terms of biological role, component of the cytochrome c oxidase, the last enzyme in the mitochondrial electron transport chain which drives oxidative phosphorylation. The respiratory chain contains 3 multisubunit complexes succinate dehydrogenase (complex II, CII), ubiquinol-cytochrome c oxidoreductase (cytochrome b-c1 complex, complex III, CIII) and cytochrome c oxidase (complex IV, CIV), that cooperate to transfer electrons derived from NADH and succinate to molecular oxygen, creating an electrochemical gradient over the inner membrane that drives transmembrane transport and the ATP synthase. Cytochrome c oxidase is the component of the respiratory chain that catalyzes the reduction of oxygen to water. Electrons originating from reduced cytochrome c in the intermembrane space (IMS) are transferred via the dinuclear copper A center (CU(A)) of subunit 2 and heme A of subunit 1 to the active site in subunit 1, a binuclear center (BNC) formed by heme A3 and copper B (CU(B)). The BNC reduces molecular oxygen to 2 water molecules using 4 electrons from cytochrome c in the IMS and 4 protons from the mitochondrial matrix. The sequence is that of Cytochrome c oxidase subunit 2 (MT-CO2) from Speothos venaticus (Bush dog).